We begin with the raw amino-acid sequence, 266 residues long: uncharacterized protein (266 aa).

7 helical membrane-spanning segments follow: residues 25 to 45 (LPSL…GYLL), 64 to 84 (IGAA…AELI), 111 to 131 (IVTI…GHLV), 158 to 178 (VLIS…LSFG), 186 to 206 (ILGI…HVVA), 209 to 229 (FVIP…IGNI), and 230 to 250 (IPAF…IYFI).

Belongs to the FNT transporter (TC 1.A.16) family.

The protein localises to the cell membrane. This is an uncharacterized protein from Bacillus subtilis (strain 168).